We begin with the raw amino-acid sequence, 478 residues long: Putative sulfate transporter YbaR (478 aa).

12 consecutive transmembrane segments (helical) span residues 19–39, 42–62, 65–85, 87–107, 121–141, 143–163, 168–188, 220–240, 259–279, 295–315, 345–365, and 366–386; these read ILAGILVALALIPEAIGFSII, VDPMVGLYASFCIAIIISIFG, PGMISAATGSMAVVMVSLVAD, GLQYLFAATILTGIIQVILGI, VMIGFVNALAILIFSAQLPQF, GASWSMYAMLAGSLVIIYVLP, AVPSPLVAIIVMTIIAVTFHV, IIFPYSIALAFVGLLESLLTA, GQGIANIVTGFFGGMAGCAMI, SAFVAGAFLMFLIAVLSHVVV, APLTDSIVMVVTVVTVVVTDD, and LSKGVFVGVLLSAVFFVAKIS. Residues 389-478 enclose the STAS domain; it reads KIVSHAEDQK…ASKSLMKQMA (90 aa).

The protein belongs to the SLC26A/SulP transporter (TC 2.A.53) family.

Its subcellular location is the cell membrane. The sequence is that of Putative sulfate transporter YbaR (ybaR) from Bacillus subtilis (strain 168).